We begin with the raw amino-acid sequence, 120 residues long: UPF0091 protein PH1455 (120 aa).

The protein belongs to the UPF0091 family.

In Pyrococcus horikoshii (strain ATCC 700860 / DSM 12428 / JCM 9974 / NBRC 100139 / OT-3), this protein is UPF0091 protein PH1455.